A 277-amino-acid chain; its full sequence is Indole-3-glycerol phosphate synthase (277 aa).

This sequence belongs to the TrpC family.

It carries out the reaction 1-(2-carboxyphenylamino)-1-deoxy-D-ribulose 5-phosphate + H(+) = (1S,2R)-1-C-(indol-3-yl)glycerol 3-phosphate + CO2 + H2O. Its pathway is amino-acid biosynthesis; L-tryptophan biosynthesis; L-tryptophan from chorismate: step 4/5. This is Indole-3-glycerol phosphate synthase from Pseudomonas putida (strain W619).